A 149-amino-acid chain; its full sequence is D-aminoacyl-tRNA deacylase (149 aa).

A Gly-cisPro motif, important for rejection of L-amino acids motif is present at residues 137–138 (GP).

The protein belongs to the DTD family. As to quaternary structure, homodimer.

It localises to the cytoplasm. The enzyme catalyses glycyl-tRNA(Ala) + H2O = tRNA(Ala) + glycine + H(+). It carries out the reaction a D-aminoacyl-tRNA + H2O = a tRNA + a D-alpha-amino acid + H(+). In terms of biological role, an aminoacyl-tRNA editing enzyme that deacylates mischarged D-aminoacyl-tRNAs. Also deacylates mischarged glycyl-tRNA(Ala), protecting cells against glycine mischarging by AlaRS. Acts via tRNA-based rather than protein-based catalysis; rejects L-amino acids rather than detecting D-amino acids in the active site. By recycling D-aminoacyl-tRNA to D-amino acids and free tRNA molecules, this enzyme counteracts the toxicity associated with the formation of D-aminoacyl-tRNA entities in vivo and helps enforce protein L-homochirality. In Thermotoga petrophila (strain ATCC BAA-488 / DSM 13995 / JCM 10881 / RKU-1), this protein is D-aminoacyl-tRNA deacylase.